We begin with the raw amino-acid sequence, 335 residues long: Glycerol-3-phosphate dehydrogenase [NAD(P)+] (335 aa).

4 residues coordinate NADPH: S10, F11, R31, and K105. K105, G136, and S138 together coordinate sn-glycerol 3-phosphate. A140 serves as a coordination point for NADPH. Residues K191, D244, S254, R255, and N256 each coordinate sn-glycerol 3-phosphate. The active-site Proton acceptor is K191. R255 provides a ligand contact to NADPH. V279 and E281 together coordinate NADPH.

This sequence belongs to the NAD-dependent glycerol-3-phosphate dehydrogenase family.

The protein resides in the cytoplasm. The enzyme catalyses sn-glycerol 3-phosphate + NAD(+) = dihydroxyacetone phosphate + NADH + H(+). It carries out the reaction sn-glycerol 3-phosphate + NADP(+) = dihydroxyacetone phosphate + NADPH + H(+). The protein operates within membrane lipid metabolism; glycerophospholipid metabolism. In terms of biological role, catalyzes the reduction of the glycolytic intermediate dihydroxyacetone phosphate (DHAP) to sn-glycerol 3-phosphate (G3P), the key precursor for phospholipid synthesis. This chain is Glycerol-3-phosphate dehydrogenase [NAD(P)+], found in Myxococcus xanthus (strain DK1622).